We begin with the raw amino-acid sequence, 445 residues long: Phosphoglucosamine mutase (445 aa).

The active-site Phosphoserine intermediate is the Ser102. Mg(2+) is bound by residues Ser102, Asp241, Asp243, and Asp245. Ser102 is modified (phosphoserine).

The protein belongs to the phosphohexose mutase family. The cofactor is Mg(2+). Post-translationally, activated by phosphorylation.

The catalysed reaction is alpha-D-glucosamine 1-phosphate = D-glucosamine 6-phosphate. Catalyzes the conversion of glucosamine-6-phosphate to glucosamine-1-phosphate. This is Phosphoglucosamine mutase from Rhodococcus opacus (strain B4).